Reading from the N-terminus, the 21-residue chain is Helicopsin (21 aa).

It belongs to the CRISP family. Post-translationally, contains 8 disulfide bonds. As to expression, expressed by the salivary gland.

Its subcellular location is the secreted. In terms of biological role, helicopsin exhibits robust neurotoxic activity as shown by immediate death (about 8 minutes) of mice due to respiratory paralysis. The polypeptide is Helicopsin (Helicops angulatus (South American water snake)).